The following is a 582-amino-acid chain: Protein NRT1/ PTR FAMILY 5.2 (582 aa).

11 helical membrane passes run 77-97 (WVGTSWLTPILGAYVGDALLG), 100-120 (ITFVISCAIYFSGMMVLTLSV), 141-161 (ASVLQLAVFFGALYTLAIGTG), 189-209 (FFNWWMFSIFFGTLFANTVLV), 217-237 (WTLGYGLPTLGLAISITIFLL), 334-354 (PVLFITFVPSMMLAQINTLFV), 370-390 (IPPASLSGFVTLSMLISIVLY), 408-428 (ITLLQRMGIGLIFHILIMIVA), 452-472 (LPLTIFALLPQFVLMGMADSF), 493-515 (GTSYSTTSLAIGNFMSSFLLSTV), and 538-558 (YYYLFFAVLNLVNFVLFLVVV).

It belongs to the major facilitator superfamily. Proton-dependent oligopeptide transporter (POT/PTR) (TC 2.A.17) family. Expressed in roots. Detected in shoots, leaves and flowers.

It localises to the membrane. In terms of biological role, peptide transporter involved in stress tolerance in seeds during germination and in defense against virulent bacterial pathogens. This chain is Protein NRT1/ PTR FAMILY 5.2 (NPF5.2), found in Arabidopsis thaliana (Mouse-ear cress).